Reading from the N-terminus, the 760-residue chain is 5-methyltetrahydropteroyltriglutamate--homocysteine methyltransferase (760 aa).

Residues 15–18 and K114 each bind 5-methyltetrahydropteroyltri-L-glutamate; that span reads RELK. L-homocysteine is bound by residues 436–438 and E489; that span reads IGS. Residues 436-438 and E489 contribute to the L-methionine site; that span reads IGS. 5-methyltetrahydropteroyltri-L-glutamate contacts are provided by residues 520-521 and W566; that span reads RC. D604 is a binding site for L-homocysteine. Residue D604 participates in L-methionine binding. 5-methyltetrahydropteroyltri-L-glutamate is bound at residue E610. H646, C648, and E670 together coordinate Zn(2+). H699 (proton donor) is an active-site residue. C731 is a Zn(2+) binding site.

Belongs to the vitamin-B12 independent methionine synthase family. Zn(2+) serves as cofactor.

The enzyme catalyses 5-methyltetrahydropteroyltri-L-glutamate + L-homocysteine = tetrahydropteroyltri-L-glutamate + L-methionine. The protein operates within amino-acid biosynthesis; L-methionine biosynthesis via de novo pathway; L-methionine from L-homocysteine (MetE route): step 1/1. Its function is as follows. Catalyzes the transfer of a methyl group from 5-methyltetrahydrofolate to homocysteine resulting in methionine formation. In Shewanella oneidensis (strain ATCC 700550 / JCM 31522 / CIP 106686 / LMG 19005 / NCIMB 14063 / MR-1), this protein is 5-methyltetrahydropteroyltriglutamate--homocysteine methyltransferase.